Here is a 263-residue protein sequence, read N- to C-terminus: Leucyl/phenylalanyl-tRNA--protein transferase (263 aa).

It belongs to the L/F-transferase family.

The protein localises to the cytoplasm. It carries out the reaction N-terminal L-lysyl-[protein] + L-leucyl-tRNA(Leu) = N-terminal L-leucyl-L-lysyl-[protein] + tRNA(Leu) + H(+). The enzyme catalyses N-terminal L-arginyl-[protein] + L-leucyl-tRNA(Leu) = N-terminal L-leucyl-L-arginyl-[protein] + tRNA(Leu) + H(+). It catalyses the reaction L-phenylalanyl-tRNA(Phe) + an N-terminal L-alpha-aminoacyl-[protein] = an N-terminal L-phenylalanyl-L-alpha-aminoacyl-[protein] + tRNA(Phe). Its function is as follows. Functions in the N-end rule pathway of protein degradation where it conjugates Leu, Phe and, less efficiently, Met from aminoacyl-tRNAs to the N-termini of proteins containing an N-terminal arginine or lysine. In Novosphingobium aromaticivorans (strain ATCC 700278 / DSM 12444 / CCUG 56034 / CIP 105152 / NBRC 16084 / F199), this protein is Leucyl/phenylalanyl-tRNA--protein transferase.